A 282-amino-acid chain; its full sequence is tRNA pseudouridine synthase A (282 aa).

Asp-53 (nucleophile) is an active-site residue. Tyr-119 is a substrate binding site.

This sequence belongs to the tRNA pseudouridine synthase TruA family. As to quaternary structure, homodimer.

It catalyses the reaction uridine(38/39/40) in tRNA = pseudouridine(38/39/40) in tRNA. Its function is as follows. Formation of pseudouridine at positions 38, 39 and 40 in the anticodon stem and loop of transfer RNAs. In Corynebacterium efficiens (strain DSM 44549 / YS-314 / AJ 12310 / JCM 11189 / NBRC 100395), this protein is tRNA pseudouridine synthase A.